A 519-amino-acid chain; its full sequence is Glutamate--cysteine ligase (519 aa).

It belongs to the glutamate--cysteine ligase type 1 family. Type 1 subfamily.

It catalyses the reaction L-cysteine + L-glutamate + ATP = gamma-L-glutamyl-L-cysteine + ADP + phosphate + H(+). It participates in sulfur metabolism; glutathione biosynthesis; glutathione from L-cysteine and L-glutamate: step 1/2. This is Glutamate--cysteine ligase from Photorhabdus laumondii subsp. laumondii (strain DSM 15139 / CIP 105565 / TT01) (Photorhabdus luminescens subsp. laumondii).